The following is an 83-amino-acid chain: Apolipoprotein C-I, basic form (83 aa).

Positions 1 to 26 (MRLFLSLPVLVVVLSIVLEGPAPAQG) are cleaved as a signal peptide.

The protein belongs to the apolipoprotein C1 family.

The protein resides in the secreted. Functionally, inhibitor of lipoprotein binding to the low density lipoprotein (LDL) receptor, LDL receptor-related protein, and very low density lipoprotein (VLDL) receptor. Associates with high density lipoproteins (HDL) and the triacylglycerol-rich lipoproteins in the plasma and makes up about 10% of the protein of the VLDL and 2% of that of HDL. Appears to interfere directly with fatty acid uptake and is also the major plasma inhibitor of cholesteryl ester transfer protein (CETP). Binds free fatty acids and reduces their intracellular esterification. Modulates the interaction of APOE with beta-migrating VLDL and inhibits binding of beta-VLDL to the LDL receptor-related protein. The sequence is that of Apolipoprotein C-I, basic form (APOC1B) from Pan troglodytes (Chimpanzee).